A 643-amino-acid polypeptide reads, in one-letter code: RNA-binding protein MEX3D (643 aa).

2 disordered regions span residues Met-1 to Ala-48 and Gly-61 to Asp-92. Residues Thr-18–Asp-34 are compositionally biased toward low complexity. The segment covering Cys-83–Asp-92 has biased composition (acidic residues). KH domains lie at Met-160–Ile-221 and Gln-253–Ile-314. Disordered stretches follow at residues Pro-357 to Thr-427, Gly-471 to Ser-505, and Val-519 to Pro-583. Positions Gly-405–Gly-418 are enriched in gly residues. Phosphothreonine is present on Thr-491. The residue at position 495 (Ser-495) is a Phosphoserine. 3 stretches are compositionally biased toward low complexity: residues Ser-495–Ser-505, Leu-531–Leu-556, and Pro-567–Pro-583. The segment at Cys-592 to Arg-632 adopts an RING-type zinc-finger fold.

Its subcellular location is the cytoplasm. It is found in the nucleus. Its function is as follows. RNA binding protein, may be involved in post-transcriptional regulatory mechanisms. The protein is RNA-binding protein MEX3D (Mex3d) of Mus musculus (Mouse).